A 240-amino-acid chain; its full sequence is Uridylate kinase (240 aa).

Residue 13–16 (KLSG) coordinates ATP. The interval 21–26 (GEKGFG) is involved in allosteric activation by GTP. Residue glycine 55 participates in UMP binding. ATP-binding residues include glycine 56 and arginine 60. Residues aspartate 75 and 136–143 (IGNPYFST) contribute to the UMP site. ATP-binding residues include asparagine 164, tyrosine 170, and aspartate 173.

The protein belongs to the UMP kinase family. In terms of assembly, homohexamer.

It localises to the cytoplasm. It carries out the reaction UMP + ATP = UDP + ADP. It functions in the pathway pyrimidine metabolism; CTP biosynthesis via de novo pathway; UDP from UMP (UMPK route): step 1/1. With respect to regulation, allosterically activated by GTP. Inhibited by UTP. Its function is as follows. Catalyzes the reversible phosphorylation of UMP to UDP. This chain is Uridylate kinase, found in Staphylococcus aureus (strain USA300).